Consider the following 691-residue polypeptide: DNA-directed RNA polymerase subunit beta' (691 aa).

Cysteine 69, cysteine 71, cysteine 87, and cysteine 90 together coordinate Zn(2+). Residues aspartate 489, aspartate 491, and aspartate 493 each coordinate Mg(2+).

It belongs to the RNA polymerase beta' chain family. RpoC1 subfamily. In terms of assembly, in plastids the minimal PEP RNA polymerase catalytic core is composed of four subunits: alpha, beta, beta', and beta''. When a (nuclear-encoded) sigma factor is associated with the core the holoenzyme is formed, which can initiate transcription. It depends on Mg(2+) as a cofactor. Requires Zn(2+) as cofactor.

It localises to the plastid. The protein localises to the chloroplast. It catalyses the reaction RNA(n) + a ribonucleoside 5'-triphosphate = RNA(n+1) + diphosphate. DNA-dependent RNA polymerase catalyzes the transcription of DNA into RNA using the four ribonucleoside triphosphates as substrates. This is DNA-directed RNA polymerase subunit beta' from Jasminum nudiflorum (Winter jasmine).